Consider the following 330-residue polypeptide: DNA-directed RNA polymerase subunit alpha (330 aa).

An alpha N-terminal domain (alpha-NTD) region spans residues 1 to 237 (MYTEINEMLT…RQLHAFVDMK (237 aa)). The alpha C-terminal domain (alpha-CTD) stretch occupies residues 251–330 (FDPVLLRSVD…ENWPPASLGE (80 aa)).

This sequence belongs to the RNA polymerase alpha chain family. Homodimer. The RNAP catalytic core consists of 2 alpha, 1 beta, 1 beta' and 1 omega subunit. When a sigma factor is associated with the core the holoenzyme is formed, which can initiate transcription.

The enzyme catalyses RNA(n) + a ribonucleoside 5'-triphosphate = RNA(n+1) + diphosphate. Its function is as follows. DNA-dependent RNA polymerase catalyzes the transcription of DNA into RNA using the four ribonucleoside triphosphates as substrates. The sequence is that of DNA-directed RNA polymerase subunit alpha from Legionella pneumophila (strain Paris).